The chain runs to 424 residues: CUGBP Elav-like family member 4 (424 aa).

Positions 8–27 are disordered; that stretch reads VANGQPDNSSLSSNPTGHMN. Residues 9–24 are compositionally biased toward polar residues; the sequence is ANGQPDNSSLSSNPTG. 2 consecutive RRM domains span residues 47–128 and 342–417; these read IKLF…PADS and PQPP…LKRP.

Belongs to the CELF/BRUNOL family.

It localises to the nucleus. The protein localises to the cytoplasm. Functionally, RNA-binding protein that may be implicated in the regulation of pre-mRNA alternative splicing. The polypeptide is CUGBP Elav-like family member 4 (celf4) (Xenopus tropicalis (Western clawed frog)).